A 257-amino-acid polypeptide reads, in one-letter code: Type III pantothenate kinase (257 aa).

ATP is bound at residue 24–31 (MIGNSRLH). Substrate contacts are provided by residues tyrosine 96 and 100–103 (GIDR). The active-site Proton acceptor is aspartate 102. Aspartate 122 lines the K(+) pocket. Residue threonine 125 coordinates ATP. Threonine 180 serves as a coordination point for substrate.

This sequence belongs to the type III pantothenate kinase family. Homodimer. NH4(+) is required as a cofactor. Requires K(+) as cofactor.

Its subcellular location is the cytoplasm. The enzyme catalyses (R)-pantothenate + ATP = (R)-4'-phosphopantothenate + ADP + H(+). It functions in the pathway cofactor biosynthesis; coenzyme A biosynthesis; CoA from (R)-pantothenate: step 1/5. Functionally, catalyzes the phosphorylation of pantothenate (Pan), the first step in CoA biosynthesis. This Synechocystis sp. (strain ATCC 27184 / PCC 6803 / Kazusa) protein is Type III pantothenate kinase.